The sequence spans 347 residues: DnaJ protein ERDJ3B (347 aa).

The signal sequence occupies residues 1-23 (MAAPRWIGPLLLLLLHFVAAVAG). A J domain is found at 25-90 (SYYDVLQVPK…EKRKIYDRYG (66 aa)).

As to quaternary structure, interacts with BIP1.

Its subcellular location is the endoplasmic reticulum. In terms of biological role, may play a role in protein folding in the endoplasmic reticulum. The chain is DnaJ protein ERDJ3B from Oryza sativa subsp. japonica (Rice).